The primary structure comprises 123 residues: uncharacterized protein (123 aa).

One can recognise a Rhodanese domain in the interval 17–117; sequence LNNNAFLVDV…NNQDKGWKQN (101 aa).

This is an uncharacterized protein from Rickettsia prowazekii (strain Madrid E).